The chain runs to 103 residues: MSTLGKAPGALKSVDYEVFGRVQGVCFRMYTEEEARKLGVVGWVKNTSQGTVTGQVQGPEDKVNAMKSWLTKVGSPSSRIDRTNFSNEKEISKLDFSGFSTRY.

Residue Ser-2 is modified to N-acetylserine. Residues 13-103 (SVDYEVFGRV…LDFSGFSTRY (91 aa)) form the Acylphosphatase-like domain. Catalysis depends on residues Arg-28 and Asn-46.

Belongs to the acylphosphatase family.

The enzyme catalyses an acyl phosphate + H2O = a carboxylate + phosphate + H(+). Functionally, its physiological role is not yet clear. This chain is Acylphosphatase-2 (ACYP2), found in Anas platyrhynchos (Mallard).